Consider the following 754-residue polypeptide: MIETIQADWIKSEAINLENCCNDNPLKILGPHFYEEQWVIRVWMPEADEVKINFKNNTYKAESINHKWLFEAILPENPNHNYEINILRGGVTHTQHDPWSYREEWMGEVDRHLFAEGNHHHIWEKMGAHLIEEKNQKGVMFCIWAPNAKSISIIGDINSWDGRHHPMQKRLGGIWELFMPSMQEGDTYKYEIRTQQGHIYEKADPYGFLHEIRPQNGSIVSKLKNFNWNDSSWISNRDSSSQINKPISVYEMHLGSWLHESTDNKYLENNGDPRDPVPAADLKPGTRLLTYPELTKKLIPYVKERGFTHIELMPISEHPFDGSWGYQVTGWYAPTSRFGTPNEFREFVNKCHEEGIGVILDWVPGHFPKDKHGLAFFDGCHLYEHGDSRIGEHKEWGTLIFNYSRNEVRNFLVANLVYWFEEFHIDGIRVDAVASMLYRDYLRPDGEWIPNENGGNENIEAVKFLQQANHVLFQHFPGALSIAEESTTWPMVTKPTDMGGLGFNLKWNMGWMHDMLDYFEIDPWFRQFHQNSVTFSITYNYTENFMLALSHDEVVHGKSHLLHKMPGDDWKKYANTRALLTYMWTHPGKKTIFMGMEFGQRQEWNVWDDLQWELLEFEPHKGIRNLIDDLNVLYKNEPALWKNDFDPYGFQWIDCNDKSNSVISFMRRENDTNEWLVVVANFTPNTHESYKVGVPMEGFYREIFNSDGSRYGGSNKGNLGGKETINYNIHDYQNALELALPPLSVSIFKHQSKK.

Asp431 functions as the Nucleophile in the catalytic mechanism. Residue Glu484 is the Proton donor of the active site.

This sequence belongs to the glycosyl hydrolase 13 family. GlgB subfamily. Monomer.

It carries out the reaction Transfers a segment of a (1-&gt;4)-alpha-D-glucan chain to a primary hydroxy group in a similar glucan chain.. The protein operates within glycan biosynthesis; glycogen biosynthesis. Functionally, catalyzes the formation of the alpha-1,6-glucosidic linkages in glycogen by scission of a 1,4-alpha-linked oligosaccharide from growing alpha-1,4-glucan chains and the subsequent attachment of the oligosaccharide to the alpha-1,6 position. The sequence is that of 1,4-alpha-glucan branching enzyme GlgB from Prochlorococcus marinus (strain AS9601).